A 217-amino-acid chain; its full sequence is MAEVSAQMVKELRERTNAGMMDCKKALAESGGDFAKAEEWLRKKGIAKAAGKEGRVASEGIIGTYVHSGRIGVIVEVNCETDFVARNPDFQELVKDVAMQIAAAGPKFVRREEVPTDNLDKEKDIQREILKQQGKPEAMLEKILVGKMEKYYEGVCLVDQLWVKDDKKKVGEMISERAAKIGEKVSVRRFVRYELGEGIEKKKDDLAAEVAKTLGQA.

The segment at 81–84 (TDFV) is involved in Mg(2+) ion dislocation from EF-Tu.

Belongs to the EF-Ts family.

The protein localises to the cytoplasm. In terms of biological role, associates with the EF-Tu.GDP complex and induces the exchange of GDP to GTP. It remains bound to the aminoacyl-tRNA.EF-Tu.GTP complex up to the GTP hydrolysis stage on the ribosome. This is Elongation factor Ts from Myxococcus xanthus (strain DK1622).